A 251-amino-acid chain; its full sequence is Thiamine thiazole synthase (251 aa).

Residues Ser34, 53–54, Gly61, Val125, and 151–153 contribute to the NAD(+) site; these read EK and HVD. Residues Asp153 and His168 each coordinate Fe cation. Met216 lines the NAD(+) pocket. Arg226 provides a ligand contact to glycine.

The protein belongs to the THI4 family. In terms of assembly, homooctamer; tetramer of dimers. Fe(2+) is required as a cofactor.

The enzyme catalyses hydrogen sulfide + glycine + NAD(+) = ADP-5-ethyl-4-methylthiazole-2-carboxylate + nicotinamide + 3 H2O + H(+). It participates in cofactor biosynthesis; thiamine diphosphate biosynthesis. Involved in the biosynthesis of the thiazole moiety of thiamine. Catalyzes the conversion of NAD and glycine to adenosine diphosphate 5-(2-hydroxyethyl)-4-methylthiazole-2-carboxylate (ADT), an adenylated thiazole intermediate, using free sulfide as a source of sulfur. This chain is Thiamine thiazole synthase, found in Thermococcus kodakarensis (strain ATCC BAA-918 / JCM 12380 / KOD1) (Pyrococcus kodakaraensis (strain KOD1)).